The sequence spans 136 residues: T-cell receptor beta chain V region LB2 (136 aa).

A signal peptide spans 1–21 (MNKWVFCWVTLCLLTVETTHG). Positions 22-116 (DGGIITQTPK…EMTVFLCASS (95 aa)) are v segment. A disulfide bridge connects residues C45 and C113. The d segment stretch occupies residues 117–120 (IRLA). Positions 121 to 136 (SAETLYFGSGTRLTVL) are j segment.

This Mus musculus (Mouse) protein is T-cell receptor beta chain V region LB2.